A 436-amino-acid polypeptide reads, in one-letter code: Adenylyltransferase and sulfurtransferase UBA4 (436 aa).

Residues Gly74, Asp95, 102–106 (SNLHR), Lys119, and 163–164 (DT) each bind ATP. Zn(2+) is bound by residues Cys205 and Cys208. Catalysis depends on Cys222, which acts as the Glycyl thioester intermediate; for adenylyltransferase activity. Cys283 and Cys286 together coordinate Zn(2+). Residues 335–434 (NEKDHILIDV…YIDEEDHSYP (100 aa)) enclose the Rhodanese domain. The active-site Cysteine persulfide intermediate; for sulfurtransferase activity is Cys393.

This sequence in the N-terminal section; belongs to the HesA/MoeB/ThiF family. UBA4 subfamily. Zn(2+) serves as cofactor.

It localises to the cytoplasm. Its subcellular location is the cytosol. It functions in the pathway tRNA modification; 5-methoxycarbonylmethyl-2-thiouridine-tRNA biosynthesis. Functionally, plays a central role in 2-thiolation of mcm(5)S(2)U at tRNA wobble positions of cytosolic tRNA(Lys), tRNA(Glu) and tRNA(Gln). Acts by mediating the C-terminal thiocarboxylation of sulfur carrier URM1. Its N-terminus first activates URM1 as acyl-adenylate (-COAMP), then the persulfide sulfur on the catalytic cysteine is transferred to URM1 to form thiocarboxylation (-COSH) of its C-terminus. The reaction probably involves hydrogen sulfide that is generated from the persulfide intermediate and that acts as a nucleophile towards URM1. Subsequently, a transient disulfide bond is formed. Does not use thiosulfate as sulfur donor; NFS1 probably acting as a sulfur donor for thiocarboxylation reactions. Prior mcm(5) tRNA modification by the elongator complex is required for 2-thiolation. May also be involved in protein urmylation. This Vanderwaltozyma polyspora (strain ATCC 22028 / DSM 70294 / BCRC 21397 / CBS 2163 / NBRC 10782 / NRRL Y-8283 / UCD 57-17) (Kluyveromyces polysporus) protein is Adenylyltransferase and sulfurtransferase UBA4.